The primary structure comprises 357 residues: Histidine biosynthesis bifunctional protein HisB (357 aa).

Positions 1 to 168 are histidinol-phosphatase; sequence MSEKVLFIDR…IVFKLTKKHD (168 aa). The active-site Nucleophile is Asp-9. Asp-9 and Asp-11 together coordinate Mg(2+). Catalysis depends on Asp-11, which acts as the Proton donor. Positions 93, 95, 101, and 103 each coordinate Zn(2+). Asp-130 provides a ligand contact to Mg(2+). The imidazoleglycerol-phosphate dehydratase stretch occupies residues 169 to 357; sequence RHAKVVRNTK…KNLPSSKGLL (189 aa).

The protein in the N-terminal section; belongs to the histidinol-phosphatase family. It in the C-terminal section; belongs to the imidazoleglycerol-phosphate dehydratase family. Mg(2+) serves as cofactor. Zn(2+) is required as a cofactor.

It localises to the cytoplasm. It carries out the reaction D-erythro-1-(imidazol-4-yl)glycerol 3-phosphate = 3-(imidazol-4-yl)-2-oxopropyl phosphate + H2O. The enzyme catalyses L-histidinol phosphate + H2O = L-histidinol + phosphate. The protein operates within amino-acid biosynthesis; L-histidine biosynthesis; L-histidine from 5-phospho-alpha-D-ribose 1-diphosphate: step 6/9. It functions in the pathway amino-acid biosynthesis; L-histidine biosynthesis; L-histidine from 5-phospho-alpha-D-ribose 1-diphosphate: step 8/9. The sequence is that of Histidine biosynthesis bifunctional protein HisB from Buchnera aphidicola subsp. Baizongia pistaciae (strain Bp).